A 261-amino-acid chain; its full sequence is MAHQAHAYHMVDPSPWPLTGAIAALLLTSGTAVWFHFHSLTLLTLGNILLLLTMYQWWRDIIREGTFQGHHTPPVQKGLRYGMILFITSEVFFFLGFFWAFYHASLAPTPELGGCWPPTGITTLDPFEVPLLNTAVLLASGVTVTWAHHSIMEGERKQTIQALTLTILLGFYFTFLQGMEYYEAPFTIADGVYGSTFFVATGFHGLHVIIGSTFLAVCLLRQVQYHFTSEHHFGFEAAAWYWHFVDVVWLFLYVSIYWWGS.

Residues 1–15 (MAHQAHAYHMVDPSP) lie on the Mitochondrial matrix side of the membrane. Residues 16–34 (WPLTGAIAALLLTSGTAVW) traverse the membrane as a helical segment. At 35-40 (FHFHSL) the chain is on the mitochondrial intermembrane side. Residues 41-66 (TLLTLGNILLLLTMYQWWRDIIREGT) traverse the membrane as a helical segment. Residues 67 to 72 (FQGHHT) are Mitochondrial matrix-facing. The chain crosses the membrane as a helical span at residues 73-105 (PPVQKGLRYGMILFITSEVFFFLGFFWAFYHAS). The Mitochondrial intermembrane portion of the chain corresponds to 106–128 (LAPTPELGGCWPPTGITTLDPFE). The helical transmembrane segment at 129-152 (VPLLNTAVLLASGVTVTWAHHSIM) threads the bilayer. The Mitochondrial matrix portion of the chain corresponds to 153-155 (EGE). The helical transmembrane segment at 156–183 (RKQTIQALTLTILLGFYFTFLQGMEYYE) threads the bilayer. The Mitochondrial intermembrane segment spans residues 184-190 (APFTIAD). The chain crosses the membrane as a helical span at residues 191-223 (GVYGSTFFVATGFHGLHVIIGSTFLAVCLLRQV). Topologically, residues 224-232 (QYHFTSEHH) are mitochondrial matrix. A helical transmembrane segment spans residues 233–256 (FGFEAAAWYWHFVDVVWLFLYVSI). The Mitochondrial intermembrane segment spans residues 257-261 (YWWGS).

It belongs to the cytochrome c oxidase subunit 3 family. As to quaternary structure, component of the cytochrome c oxidase (complex IV, CIV), a multisubunit enzyme composed of 14 subunits. The complex is composed of a catalytic core of 3 subunits MT-CO1, MT-CO2 and MT-CO3, encoded in the mitochondrial DNA, and 11 supernumerary subunits COX4I, COX5A, COX5B, COX6A, COX6B, COX6C, COX7A, COX7B, COX7C, COX8 and NDUFA4, which are encoded in the nuclear genome. The complex exists as a monomer or a dimer and forms supercomplexes (SCs) in the inner mitochondrial membrane with NADH-ubiquinone oxidoreductase (complex I, CI) and ubiquinol-cytochrome c oxidoreductase (cytochrome b-c1 complex, complex III, CIII), resulting in different assemblies (supercomplex SCI(1)III(2)IV(1) and megacomplex MCI(2)III(2)IV(2)).

It is found in the mitochondrion inner membrane. The enzyme catalyses 4 Fe(II)-[cytochrome c] + O2 + 8 H(+)(in) = 4 Fe(III)-[cytochrome c] + 2 H2O + 4 H(+)(out). Functionally, component of the cytochrome c oxidase, the last enzyme in the mitochondrial electron transport chain which drives oxidative phosphorylation. The respiratory chain contains 3 multisubunit complexes succinate dehydrogenase (complex II, CII), ubiquinol-cytochrome c oxidoreductase (cytochrome b-c1 complex, complex III, CIII) and cytochrome c oxidase (complex IV, CIV), that cooperate to transfer electrons derived from NADH and succinate to molecular oxygen, creating an electrochemical gradient over the inner membrane that drives transmembrane transport and the ATP synthase. Cytochrome c oxidase is the component of the respiratory chain that catalyzes the reduction of oxygen to water. Electrons originating from reduced cytochrome c in the intermembrane space (IMS) are transferred via the dinuclear copper A center (CU(A)) of subunit 2 and heme A of subunit 1 to the active site in subunit 1, a binuclear center (BNC) formed by heme A3 and copper B (CU(B)). The BNC reduces molecular oxygen to 2 water molecules using 4 electrons from cytochrome c in the IMS and 4 protons from the mitochondrial matrix. This is Cytochrome c oxidase subunit 3 (mt-co3) from Oncorhynchus clarkii (Cutthroat trout).